The sequence spans 271 residues: MTIIHPLLASSSAPNYRQSWRLAGVWRRAINLMTESGELLTLHRQGSGFGPGGWVLRRAQFDALCGGLCGNERPQVVAQGIRLGRFTVKQPQRYCLLRITPPAHPQPLAAAWMQRAEETGLFGPLALAASDPLPAELRQFRHCFQAALNGVKTDWRHWLGKGPGLTPSHDDTLSGMLLAAWYYGALDARSGRPFFACSDNLQLVTTAVSVSYLRYAAQGYFASPLLHFVHALSCPKRTAVAIDSLLALGHTSGADTLLGFWLGQQLLQGKP.

This sequence belongs to the AllH family. As to quaternary structure, the OXTCase is composed of 3 subunits, AllF, AllG and AllH. The cofactor is Mg(2+).

It catalyses the reaction oxamate + carbamoyl phosphate = N-carbamoyl-2-oxoglycine + phosphate. The protein operates within nitrogen metabolism; (S)-allantoin degradation. Component of a carbamoyltransferase involved in the anaerobic nitrogen utilization via the assimilation of allantoin. Catalyzes the conversion of oxalurate (N-carbamoyl-2-oxoglycine) to oxamate and carbamoyl phosphate. The polypeptide is Oxamate carbamoyltransferase subunit AllH (Escherichia coli O157:H7).